Here is a 361-residue protein sequence, read N- to C-terminus: Large ribosomal subunit protein mL45 (361 aa).

The protein belongs to the mitochondrion-specific ribosomal protein mL45 family.

The protein localises to the mitochondrion. In Caenorhabditis briggsae, this protein is Large ribosomal subunit protein mL45 (mrpl-45).